The primary structure comprises 758 residues: Spastin (758 aa).

The disordered stretch occupies residues 1-103 (MVRTKNQSSS…SPRSGHHHSY (103 aa)). Residues 1-121 (MVRTKNQSSS…KQNLYVVSFP (121 aa)) lie on the Cytoplasmic side of the membrane. An interaction with atl region spans residues 1–159 (MVRTKNQSSS…VIYRPHRRDC (159 aa)). The required for localization to punctate cytoplasmic foci stretch occupies residues 1 to 210 (MVRTKNQSSS…RPIQPLEMAA (210 aa)). Composition is skewed to low complexity over residues 8–28 (SSSS…SSGA), 43–58 (RSSS…AGGS), 66–76 (SSNRRSPGSSP), and 85–95 (TDDLTPTTCSP). The helical intramembrane region spans 122–142 (IIFLFNVLRSLIYQLFCIFRY). Residues 143 to 758 (LYGASTKVIY…WSQDYGDITI (616 aa)) lie on the Cytoplasmic side of the membrane. 2 stretches are compositionally biased toward polar residues: residues 169–180 (SKEQQQSLNHPS) and 189–198 (QEQQLSNQPQ). The interval 169-202 (SKEQQQSLNHPSELNREGDGQEQQLSNQPQRFRP) is disordered. Residues 208–758 (MAANRPGGGY…WSQDYGDITI (551 aa)) are sufficient for interaction with microtubules and microtubule severing. An MIT domain is found at 233-308 (HRRAFEYISK…SMARDRLHFL (76 aa)). The segment at 353–454 (RVRSSGYGPK…GPSGSGASTP (102 aa)) is disordered. 2 stretches are compositionally biased toward polar residues: residues 390 to 406 (NKSQ…TSVG) and 425 to 454 (QFSS…ASTP). Phosphothreonine is present on T439. The required for interaction with microtubules stretch occupies residues 443–455 (NNGPSGSGASTPV). 523–530 (GPPGNGKT) contacts ATP.

It belongs to the AAA ATPase family. Spastin subfamily. As to quaternary structure, homohexamer. The homohexamer is stabilized by ATP-binding. The homohexamer may adopt a ring conformation through which microtubules pass prior to being severed. Interacts with microtubules. Interacts with atl; may be involved in microtubule dynamics.

It localises to the membrane. The protein localises to the cytoplasm. The protein resides in the cytoskeleton. Its subcellular location is the microtubule organizing center. It is found in the centrosome. It localises to the chromosome. The protein localises to the lipid droplet. The catalysed reaction is n ATP + n H2O + a microtubule = n ADP + n phosphate + (n+1) alpha/beta tubulin heterodimers.. In terms of biological role, ATP-dependent microtubule severing protein. Stimulates microtubule minus-end depolymerization and poleward microtubule flux in the mitotic spindle. Regulates microtubule stability in the neuromuscular junction synapse. Involved in lipid metabolism by regulating the size and distribution of lipid droplets. Involved in axon regeneration by regulating microtubule severing. The sequence is that of Spastin from Drosophila melanogaster (Fruit fly).